A 242-amino-acid polypeptide reads, in one-letter code: Beta-glucanase (242 aa).

The N-terminal stretch at 1 to 28 (MPYLKRVLLLLVTGLFMSLFAVTATASA) is a signal peptide. Position 29 is a pyrrolidone carboxylic acid (Gln29). Residues 29-242 (QTGGSFFDPF…HYDWVRYTKK (214 aa)) enclose the GH16 domain. The cysteines at positions 60 and 89 are disulfide-linked. The Nucleophile role is filled by Glu133. The active-site Proton donor is the Glu137.

The protein belongs to the glycosyl hydrolase 16 family.

The protein localises to the secreted. The catalysed reaction is Hydrolysis of (1-&gt;4)-beta-D-glucosidic linkages in beta-D-glucans containing (1-&gt;3)- and (1-&gt;4)-bonds.. The polypeptide is Beta-glucanase (bglS) (Bacillus subtilis (strain 168)).